Reading from the N-terminus, the 118-residue chain is 5-hydroxyisourate hydrolase (118 aa).

H11, R51, and Y115 together coordinate substrate.

Belongs to the transthyretin family. 5-hydroxyisourate hydrolase subfamily. In terms of assembly, homotetramer.

It localises to the peroxisome. The catalysed reaction is 5-hydroxyisourate + H2O = 5-hydroxy-2-oxo-4-ureido-2,5-dihydro-1H-imidazole-5-carboxylate + H(+). Its pathway is purine metabolism; urate degradation; (S)-allantoin from urate: step 2/3. Functionally, catalyzes the hydrolysis of 5-hydroxyisourate (HIU) to 2-oxo-4-hydroxy-4-carboxy-5-ureidoimidazoline (OHCU). This is 5-hydroxyisourate hydrolase (Urah) from Mus musculus (Mouse).